Consider the following 114-residue polypeptide: Large ribosomal subunit protein bL17 (114 aa).

It belongs to the bacterial ribosomal protein bL17 family. In terms of assembly, part of the 50S ribosomal subunit. Contacts protein L32.

This Elusimicrobium minutum (strain Pei191) protein is Large ribosomal subunit protein bL17.